The primary structure comprises 257 residues: Snake venom serine protease Haly-2 (257 aa).

The N-terminal stretch at 1–18 (MVLIRVLANLLILQLSYA) is a signal peptide. Residues 19–24 (QKSSEL) constitute a propeptide that is removed on maturation. Residues 25-248 (IIGGDECNIN…HLEWIRSIIA (224 aa)) form the Peptidase S1 domain. 6 disulfide bridges follow: Cys-31-Cys-162, Cys-49-Cys-65, Cys-97-Cys-255, Cys-141-Cys-209, Cys-173-Cys-188, and Cys-199-Cys-224. The Charge relay system role is filled by His-64. The N-linked (GlcNAc...) asparagine glycan is linked to Asn-100. The active-site Charge relay system is Asp-109. Ser-203 serves as the catalytic Charge relay system.

This sequence belongs to the peptidase S1 family. Snake venom subfamily. In terms of assembly, monomer. As to expression, expressed by the venom gland.

Its subcellular location is the secreted. Snake venom serine protease that may act in the hemostasis system of the prey. This is Snake venom serine protease Haly-2 from Gloydius brevicauda (Korean slamosa snake).